The primary structure comprises 199 residues: Large ribosomal subunit protein uL18 (199 aa).

This sequence belongs to the universal ribosomal protein uL18 family. As to quaternary structure, part of the 50S ribosomal subunit. Contacts the 5S and 23S rRNAs.

Its function is as follows. This is one of the proteins that bind and probably mediate the attachment of the 5S RNA into the large ribosomal subunit, where it forms part of the central protuberance. The polypeptide is Large ribosomal subunit protein uL18 (Saccharolobus solfataricus (strain ATCC 35092 / DSM 1617 / JCM 11322 / P2) (Sulfolobus solfataricus)).